Here is a 152-residue protein sequence, read N- to C-terminus: Flagellar assembly factor FliW (152 aa).

The protein belongs to the FliW family. Interacts with translational regulator CsrA and flagellin(s).

It localises to the cytoplasm. Functionally, acts as an anti-CsrA protein, binds CsrA and prevents it from repressing translation of its target genes, one of which is flagellin. Binds to flagellin and participates in the assembly of the flagellum. This Desulfitobacterium hafniense (strain DSM 10664 / DCB-2) protein is Flagellar assembly factor FliW.